The sequence spans 1580 residues: Pentafunctional AROM polypeptide (1580 aa).

Residues 1-381 (MATPTVIKIL…HEQKASVVSN (381 aa)) are 3-dehydroquinate synthase. Residues 44-46 (DTT), 81-84 (EVSK), 114-116 (GGV), and D119 each bind NAD(+). A 7-phospho-2-dehydro-3-deoxy-D-arabino-heptonate-binding site is contributed by R130. 139 to 140 (TT) is a binding site for NAD(+). 7-phospho-2-dehydro-3-deoxy-D-arabino-heptonate is bound by residues D146 and K152. Position 161 (K161) interacts with NAD(+). N162 is a binding site for 7-phospho-2-dehydro-3-deoxy-D-arabino-heptonate. NAD(+)-binding positions include 179 to 182 (FLNT) and N190. E194 is a binding site for Zn(2+). Residue K247 participates in 7-phospho-2-dehydro-3-deoxy-D-arabino-heptonate binding. Residue E257 is the Proton acceptor; for 3-dehydroquinate synthase activity of the active site. 7-phospho-2-dehydro-3-deoxy-D-arabino-heptonate-binding positions include 261–265 (RNLLN) and H268. H268 contributes to the Zn(2+) binding site. The Proton acceptor; for 3-dehydroquinate synthase activity role is filled by H272. H284 and K353 together coordinate 7-phospho-2-dehydro-3-deoxy-D-arabino-heptonate. H284 is a binding site for Zn(2+). The EPSP synthase stretch occupies residues 394–838 (VSPGVPHALE…WDTLAQLFKA (445 aa)). Residue C820 is the For EPSP synthase activity of the active site. The shikimate kinase stretch occupies residues 857–1048 (ASLFIIGMRG…KKKPQSFFVS (192 aa)). 863-870 (GMRGAGKT) serves as a coordination point for ATP. Residues 1049 to 1269 (LTLPDLRPSV…AAPGQLSAKE (221 aa)) are 3-dehydroquinase. H1172 functions as the Proton acceptor; for 3-dehydroquinate dehydratase activity in the catalytic mechanism. The active-site Schiff-base intermediate with substrate; for 3-dehydroquinate dehydratase activity is the K1200. The shikimate dehydrogenase stretch occupies residues 1282 to 1580 (SKKFAIVGKP…AAVMNADADI (299 aa)).

In the N-terminal section; belongs to the sugar phosphate cyclases superfamily. Dehydroquinate synthase family. It in the 2nd section; belongs to the EPSP synthase family. The protein in the 3rd section; belongs to the shikimate kinase family. This sequence in the 4th section; belongs to the type-I 3-dehydroquinase family. In the C-terminal section; belongs to the shikimate dehydrogenase family. In terms of assembly, homodimer. Requires Zn(2+) as cofactor.

Its subcellular location is the cytoplasm. It catalyses the reaction 7-phospho-2-dehydro-3-deoxy-D-arabino-heptonate = 3-dehydroquinate + phosphate. The enzyme catalyses 3-dehydroquinate = 3-dehydroshikimate + H2O. The catalysed reaction is shikimate + NADP(+) = 3-dehydroshikimate + NADPH + H(+). It carries out the reaction shikimate + ATP = 3-phosphoshikimate + ADP + H(+). It catalyses the reaction 3-phosphoshikimate + phosphoenolpyruvate = 5-O-(1-carboxyvinyl)-3-phosphoshikimate + phosphate. Its pathway is metabolic intermediate biosynthesis; chorismate biosynthesis; chorismate from D-erythrose 4-phosphate and phosphoenolpyruvate: step 2/7. It functions in the pathway metabolic intermediate biosynthesis; chorismate biosynthesis; chorismate from D-erythrose 4-phosphate and phosphoenolpyruvate: step 3/7. It participates in metabolic intermediate biosynthesis; chorismate biosynthesis; chorismate from D-erythrose 4-phosphate and phosphoenolpyruvate: step 4/7. The protein operates within metabolic intermediate biosynthesis; chorismate biosynthesis; chorismate from D-erythrose 4-phosphate and phosphoenolpyruvate: step 5/7. Its pathway is metabolic intermediate biosynthesis; chorismate biosynthesis; chorismate from D-erythrose 4-phosphate and phosphoenolpyruvate: step 6/7. In terms of biological role, the AROM polypeptide catalyzes 5 consecutive enzymatic reactions in prechorismate polyaromatic amino acid biosynthesis. In Uncinocarpus reesii (strain UAMH 1704), this protein is Pentafunctional AROM polypeptide.